A 113-amino-acid polypeptide reads, in one-letter code: uncharacterized protein (113 aa).

It is found in the mitochondrion. This is an uncharacterized protein from Paramecium tetraurelia.